A 567-amino-acid chain; its full sequence is Cytochrome P450 monooxygenase 231 (567 aa).

The helical transmembrane segment at 3–23 (VSTNELAILAIVLLATGVLFY) threads the bilayer. Asparagine 81 and asparagine 223 each carry an N-linked (GlcNAc...) asparagine glycan. Residue cysteine 475 participates in heme binding.

Belongs to the cytochrome P450 family. The cofactor is heme.

Its subcellular location is the membrane. Its pathway is secondary metabolite biosynthesis. Cytochrome P450 monooxygenase that is able to use anthracene, carbazole, pyrene, and phenanthrene as substrates for oxidation. These multifunctional properties against a series of polycyclic aromatic hydrocarbons (PAHs) suggest that CYP231 would play important roles, at least in part, in fungal metabolic systems involved in xenobiotic detoxification. This is Cytochrome P450 monooxygenase 231 from Postia placenta (strain ATCC 44394 / Madison 698-R) (Brown rot fungus).